A 244-amino-acid polypeptide reads, in one-letter code: uncharacterized protein (244 aa).

The first 17 residues, 1–17 (MVLHVITALLSIGLCYG), serve as a signal peptide directing secretion.

As to expression, component of the acid-soluble and acid-insoluble organic matrix of prismatic shell layers (at protein level).

Its subcellular location is the secreted. This is an uncharacterized protein from Haliotis asinina (Donkey's ear abalone).